We begin with the raw amino-acid sequence, 475 residues long: uncharacterized protein (475 aa).

Residues H7–Y28 form a helical membrane-spanning segment. N-linked (GlcNAc...) asparagine; by host glycosylation is found at N73, N83, and N195. Residues E183–L233 are a coiled coil. The span at S295–N305 shows a compositional bias: polar residues. The tract at residues S295–V324 is disordered. 2 N-linked (GlcNAc...) asparagine; by host glycosylation sites follow: N450 and N460.

This sequence belongs to the asfivirus B475L family.

It localises to the host membrane. This is an uncharacterized protein from Ornithodoros (relapsing fever ticks).